An 874-amino-acid chain; its full sequence is Alanine--tRNA ligase (874 aa).

The Zn(2+) site is built by His564, His568, Cys665, and His669.

This sequence belongs to the class-II aminoacyl-tRNA synthetase family. Zn(2+) serves as cofactor.

It is found in the cytoplasm. It catalyses the reaction tRNA(Ala) + L-alanine + ATP = L-alanyl-tRNA(Ala) + AMP + diphosphate. Catalyzes the attachment of alanine to tRNA(Ala) in a two-step reaction: alanine is first activated by ATP to form Ala-AMP and then transferred to the acceptor end of tRNA(Ala). Also edits incorrectly charged Ser-tRNA(Ala) and Gly-tRNA(Ala) via its editing domain. This Burkholderia mallei (strain ATCC 23344) protein is Alanine--tRNA ligase.